Reading from the N-terminus, the 198-residue chain is Probable GTP-binding protein EngB (198 aa).

The EngB-type G domain maps to asparagine 22–leucine 196. Residues glycine 30–serine 37, glycine 57–threonine 61, aspartate 75–glycine 78, threonine 142–aspartate 145, and phenylalanine 175–alanine 177 each bind GTP. Serine 37 and threonine 59 together coordinate Mg(2+).

Belongs to the TRAFAC class TrmE-Era-EngA-EngB-Septin-like GTPase superfamily. EngB GTPase family. Requires Mg(2+) as cofactor.

Necessary for normal cell division and for the maintenance of normal septation. This is Probable GTP-binding protein EngB from Oenococcus oeni (strain ATCC BAA-331 / PSU-1).